The following is a 231-amino-acid chain: 2,3-bisphosphoglycerate-dependent phosphoglycerate mutase (231 aa).

Residues 10 to 17 (RHGQSEWN), 23 to 24 (TG), R62, 89 to 92 (ERHY), K100, 116 to 117 (RR), and 185 to 186 (GN) contribute to the substrate site. Catalysis depends on H11, which acts as the Tele-phosphohistidine intermediate. The Proton donor/acceptor role is filled by E89.

It belongs to the phosphoglycerate mutase family. BPG-dependent PGAM subfamily. As to quaternary structure, homodimer.

The catalysed reaction is (2R)-2-phosphoglycerate = (2R)-3-phosphoglycerate. It participates in carbohydrate degradation; glycolysis; pyruvate from D-glyceraldehyde 3-phosphate: step 3/5. Its function is as follows. Catalyzes the interconversion of 2-phosphoglycerate and 3-phosphoglycerate. The polypeptide is 2,3-bisphosphoglycerate-dependent phosphoglycerate mutase (Buchnera aphidicola subsp. Acyrthosiphon pisum (strain APS) (Acyrthosiphon pisum symbiotic bacterium)).